A 338-amino-acid chain; its full sequence is 1-aminocyclopropane-1-carboxylate deaminase (338 aa).

Position 51 is an N6-(pyridoxal phosphate)lysine (Lys-51). The active-site Nucleophile is the Ser-78.

The protein belongs to the ACC deaminase/D-cysteine desulfhydrase family. As to quaternary structure, homotrimer. It depends on pyridoxal 5'-phosphate as a cofactor.

It carries out the reaction 1-aminocyclopropane-1-carboxylate + H2O = 2-oxobutanoate + NH4(+). Its function is as follows. Catalyzes a cyclopropane ring-opening reaction, the irreversible conversion of 1-aminocyclopropane-1-carboxylate (ACC) to ammonia and alpha-ketobutyrate. Allows growth on ACC as a nitrogen source. The polypeptide is 1-aminocyclopropane-1-carboxylate deaminase (Burkholderia cenocepacia (strain ATCC BAA-245 / DSM 16553 / LMG 16656 / NCTC 13227 / J2315 / CF5610) (Burkholderia cepacia (strain J2315))).